We begin with the raw amino-acid sequence, 148 residues long: Large ribosomal subunit protein uL15 (148 aa).

Residues 14–54 (HRKKRVGCGEGGGHGKTSGRGGKGQTARSGSSIRPGFEGGQ) are disordered. A compositionally biased stretch (gly residues) spans 21–37 (CGEGGGHGKTSGRGGKG).

The protein belongs to the universal ribosomal protein uL15 family. Part of the 50S ribosomal subunit.

Functionally, binds to the 23S rRNA. The chain is Large ribosomal subunit protein uL15 from Opitutus terrae (strain DSM 11246 / JCM 15787 / PB90-1).